The primary structure comprises 280 residues: Acyl-[acyl-carrier-protein]--UDP-N-acetylglucosamine O-acyltransferase (280 aa).

Belongs to the transferase hexapeptide repeat family. LpxA subfamily. As to quaternary structure, homotrimer.

It localises to the cytoplasm. The catalysed reaction is a (3R)-hydroxyacyl-[ACP] + UDP-N-acetyl-alpha-D-glucosamine = a UDP-3-O-[(3R)-3-hydroxyacyl]-N-acetyl-alpha-D-glucosamine + holo-[ACP]. It functions in the pathway glycolipid biosynthesis; lipid IV(A) biosynthesis; lipid IV(A) from (3R)-3-hydroxytetradecanoyl-[acyl-carrier-protein] and UDP-N-acetyl-alpha-D-glucosamine: step 1/6. Functionally, involved in the biosynthesis of lipid A, a phosphorylated glycolipid that anchors the lipopolysaccharide to the outer membrane of the cell. The sequence is that of Acyl-[acyl-carrier-protein]--UDP-N-acetylglucosamine O-acyltransferase from Chlamydia muridarum (strain MoPn / Nigg).